The sequence spans 103 residues: Matrix Gla protein (103 aa).

Positions methionine 1–cysteine 19 are cleaved as a signal peptide. Glutamate 21 carries the post-translational modification 4-carboxyglutamate; partial. Phosphoserine occurs at positions 22, 25, and 28. Residues arginine 51–arginine 97 form the Gla domain. 4-carboxyglutamate is present on residues glutamate 56, glutamate 60, glutamate 67, and glutamate 71. Residues cysteine 73 and cysteine 79 are joined by a disulfide bond. The propeptide at arginine 99 to alanine 102 is removed in short form; probably by carboxypeptidase N. Position 103 (lysine 103) is a propeptide, removed in long form; probably by carboxypeptidase H.

The protein belongs to the osteocalcin/matrix Gla protein family. Post-translationally, requires vitamin K-dependent gamma-carboxylation for its function.

It is found in the secreted. In terms of biological role, associates with the organic matrix of bone and cartilage. Thought to act as an inhibitor of bone formation. The chain is Matrix Gla protein (MGP) from Bos taurus (Bovine).